The chain runs to 95 residues: Small ribosomal subunit protein bS6 (95 aa).

Belongs to the bacterial ribosomal protein bS6 family.

Functionally, binds together with bS18 to 16S ribosomal RNA. This chain is Small ribosomal subunit protein bS6, found in Geobacillus sp. (strain WCH70).